The following is a 251-amino-acid chain: Hydroxyacylglutathione hydrolase (251 aa).

Zn(2+) contacts are provided by histidine 53, histidine 55, aspartate 57, histidine 58, histidine 110, aspartate 127, and histidine 165.

It belongs to the metallo-beta-lactamase superfamily. Glyoxalase II family. Monomer. Zn(2+) is required as a cofactor.

It catalyses the reaction an S-(2-hydroxyacyl)glutathione + H2O = a 2-hydroxy carboxylate + glutathione + H(+). The protein operates within secondary metabolite metabolism; methylglyoxal degradation; (R)-lactate from methylglyoxal: step 2/2. Its function is as follows. Thiolesterase that catalyzes the hydrolysis of S-D-lactoyl-glutathione to form glutathione and D-lactic acid. This chain is Hydroxyacylglutathione hydrolase, found in Salmonella typhi.